Here is a 146-residue protein sequence, read N- to C-terminus: Hydroxyproline-rich systemin (146 aa).

An N-terminal signal peptide occupies residues 1–24; the sequence is MISFFRAFFLIIIISFLIFVGAQA. The propeptide occupies 25 to 48; that stretch reads RTLLGNYHDDEMLIELKLESGNYG. The interval 47–128 is disordered; that stretch reads YGRTPYKTPP…PPPPKPQDEQ (82 aa). 6 positions are modified to 4-hydroxyproline: P51, P55, P56, P57, P58, and P63. 6 O-linked (Ara...) hydroxyproline glycosylation sites follow: P51, P55, P56, P57, P58, and P63. Residues 67–70 constitute a propeptide that is removed on maturation; that stretch reads EIVN. A 4-hydroxyproline mark is found at P79, P80, and P82. 3 O-linked (Ara...) hydroxyproline glycosylation sites follow: P79, P80, and P82. Residues 86 to 110 constitute a propeptide that is removed on maturation; that stretch reads PIIGQLTTITTTPHHDDTVAAPPVG. 4-hydroxyproline occurs at positions 119, 120, 121, and 122. Residues P119, P120, P121, and P122 are each glycosylated (O-linked (Ara...) hydroxyproline). Residues 131–146 constitute a propeptide that is removed on maturation; it reads IIITSSSSTLPLQASY.

Post-translationally, O-glycosylated; contains pentose side chains. Leaves.

It is found in the secreted. Its function is as follows. Activates a lipid-based signal transduction pathway in which linolenic acid is converted to jasmonic acid, a potent activator of defense gene transcription. Induces synthesis of proteinase inhibitors I and II in leaves when supplied through cut stems. In Solanum lycopersicum (Tomato), this protein is Hydroxyproline-rich systemin.